The primary structure comprises 315 residues: Ribosomal RNA small subunit methyltransferase H (315 aa).

Residues 35–37 (GGH), D55, F80, D102, and Q109 contribute to the S-adenosyl-L-methionine site.

The protein belongs to the methyltransferase superfamily. RsmH family.

It is found in the cytoplasm. It catalyses the reaction cytidine(1402) in 16S rRNA + S-adenosyl-L-methionine = N(4)-methylcytidine(1402) in 16S rRNA + S-adenosyl-L-homocysteine + H(+). Functionally, specifically methylates the N4 position of cytidine in position 1402 (C1402) of 16S rRNA. This Shewanella pealeana (strain ATCC 700345 / ANG-SQ1) protein is Ribosomal RNA small subunit methyltransferase H.